A 552-amino-acid polypeptide reads, in one-letter code: Dihydroxy-acid dehydratase (552 aa).

Residue D78 participates in Mg(2+) binding. Residue C119 coordinates [2Fe-2S] cluster. Positions 120 and 121 each coordinate Mg(2+). An N6-carboxylysine modification is found at K121. Position 191 (C191) interacts with [2Fe-2S] cluster. A Mg(2+)-binding site is contributed by E442. Residue S468 is the Proton acceptor of the active site.

It belongs to the IlvD/Edd family. As to quaternary structure, homodimer. [2Fe-2S] cluster is required as a cofactor. Mg(2+) serves as cofactor.

The enzyme catalyses (2R)-2,3-dihydroxy-3-methylbutanoate = 3-methyl-2-oxobutanoate + H2O. It catalyses the reaction (2R,3R)-2,3-dihydroxy-3-methylpentanoate = (S)-3-methyl-2-oxopentanoate + H2O. It participates in amino-acid biosynthesis; L-isoleucine biosynthesis; L-isoleucine from 2-oxobutanoate: step 3/4. It functions in the pathway amino-acid biosynthesis; L-valine biosynthesis; L-valine from pyruvate: step 3/4. In terms of biological role, functions in the biosynthesis of branched-chain amino acids. Catalyzes the dehydration of (2R,3R)-2,3-dihydroxy-3-methylpentanoate (2,3-dihydroxy-3-methylvalerate) into 2-oxo-3-methylpentanoate (2-oxo-3-methylvalerate) and of (2R)-2,3-dihydroxy-3-methylbutanoate (2,3-dihydroxyisovalerate) into 2-oxo-3-methylbutanoate (2-oxoisovalerate), the penultimate precursor to L-isoleucine and L-valine, respectively. The protein is Dihydroxy-acid dehydratase of Caldicellulosiruptor bescii (strain ATCC BAA-1888 / DSM 6725 / KCTC 15123 / Z-1320) (Anaerocellum thermophilum).